A 319-amino-acid polypeptide reads, in one-letter code: MPRREMMKCLFVSESCVCHTDLAIKDGVLPFPLPAVLGHEGSGIVEAVGPGVKHLKPGDAVVMTFASCGHCASCEHERPSYCLDFGAQNYSAQRADGPVLLSQGDEVISGFFFGQSSFSSMAMAREHNLVKIDALVDDAPIELLGPLGCGVQTGAGAVMISLDVRAGRSFLVLGGGAVGLSAVMAAKLRGCSRIIVSEPSAAKREQALALGATEVIDPLNENLVERVQQITEGQGCDYALECTGLVSVMEQAIDSMAMRGQLAVVGVPPKLDATAAVSPLALIQKGLKLMGVIEGDSCRVYSSTSCTRSSRLGVFRSPR.

7 residues coordinate Zn(2+): Cys18, His39, Cys68, Cys71, Cys74, Cys82, and Cys149.

This sequence belongs to the zinc-containing alcohol dehydrogenase family. Zn(2+) serves as cofactor.

The catalysed reaction is a primary alcohol + NAD(+) = an aldehyde + NADH + H(+). It carries out the reaction a secondary alcohol + NAD(+) = a ketone + NADH + H(+). This chain is Probable alcohol dehydrogenase (terPD), found in Pseudomonas sp.